Here is a 191-residue protein sequence, read N- to C-terminus: Imidazoleglycerol-phosphate dehydratase (191 aa).

The protein belongs to the imidazoleglycerol-phosphate dehydratase family.

The protein localises to the cytoplasm. The enzyme catalyses D-erythro-1-(imidazol-4-yl)glycerol 3-phosphate = 3-(imidazol-4-yl)-2-oxopropyl phosphate + H2O. It functions in the pathway amino-acid biosynthesis; L-histidine biosynthesis; L-histidine from 5-phospho-alpha-D-ribose 1-diphosphate: step 6/9. The sequence is that of Imidazoleglycerol-phosphate dehydratase from Methanosarcina mazei (strain ATCC BAA-159 / DSM 3647 / Goe1 / Go1 / JCM 11833 / OCM 88) (Methanosarcina frisia).